A 430-amino-acid polypeptide reads, in one-letter code: ATP-dependent RNA helicase RhlB (430 aa).

The Q motif motif lies at 9–37 (QKFSDFALHPQVIEALETKGFHNCTPIQA). The 180-residue stretch at 40–219 (LPFTLSGRDV…FENMNNAEYV (180 aa)) folds into the Helicase ATP-binding domain. 53 to 60 (AQTGTGKT) serves as a coordination point for ATP. Residues 165–168 (DEAD) carry the DEAD box motif. A Helicase C-terminal domain is found at 245–390 (RLLQTLIEEE…VSRYNSDALM (146 aa)). The segment at 388-430 (ALMTDLPPPKRLTRNRSGNGPRRGGNNNRRSSASRSPNRKRSG) is disordered. Residues 402–423 (NRSGNGPRRGGNNNRRSSASRS) show a composition bias toward low complexity.

The protein belongs to the DEAD box helicase family. RhlB subfamily. As to quaternary structure, component of the RNA degradosome, which is a multiprotein complex involved in RNA processing and mRNA degradation.

The protein resides in the cytoplasm. The enzyme catalyses ATP + H2O = ADP + phosphate + H(+). Its function is as follows. DEAD-box RNA helicase involved in RNA degradation. Has RNA-dependent ATPase activity and unwinds double-stranded RNA. This Erwinia tasmaniensis (strain DSM 17950 / CFBP 7177 / CIP 109463 / NCPPB 4357 / Et1/99) protein is ATP-dependent RNA helicase RhlB.